The following is a 31-amino-acid chain: Cytochrome b6-f complex subunit 6 (31 aa).

A helical transmembrane segment spans residues 3-23 (ALIGYILLMTLMFSLAAGLYF).

The protein belongs to the PetL family. In terms of assembly, the 4 large subunits of the cytochrome b6-f complex are cytochrome b6, subunit IV (17 kDa polypeptide, PetD), cytochrome f and the Rieske protein, while the 4 small subunits are PetG, PetL, PetM and PetN. The complex functions as a dimer.

The protein resides in the plastid. Its subcellular location is the chloroplast thylakoid membrane. Functionally, component of the cytochrome b6-f complex, which mediates electron transfer between photosystem II (PSII) and photosystem I (PSI), cyclic electron flow around PSI, and state transitions. PetL is important for photoautotrophic growth as well as for electron transfer efficiency and stability of the cytochrome b6-f complex. This chain is Cytochrome b6-f complex subunit 6, found in Emiliania huxleyi (Coccolithophore).